Here is a 284-residue protein sequence, read N- to C-terminus: MTELIDGKALAQKMQQELAAKVNNLKQKKGIVPGLAVILVGDDPASQVYVRNKERAALTVGFKSETVRLSEFICQEELIAVIERYNADNTIHGILVQLPLPNHINDKKIILAIDPKKDVDGFHPMNTGHLWSGRPLMVPCTPSGIMELLREYNVNLEGKHAVIIGRSNIVGKPMAQLLLDKNATVTLTHSRTRQLEEVCRCADVLIVAIGQGHFITKQYIKEGAIVIDVGMNRDDNGKLIGDVAFDEVAEVAAKITPVPGGVGPMTIAMLLEQTYQSALRSTHK.

NADP(+) is bound by residues 165-167 (GRS) and S190.

The protein belongs to the tetrahydrofolate dehydrogenase/cyclohydrolase family. In terms of assembly, homodimer.

It carries out the reaction (6R)-5,10-methylene-5,6,7,8-tetrahydrofolate + NADP(+) = (6R)-5,10-methenyltetrahydrofolate + NADPH. It catalyses the reaction (6R)-5,10-methenyltetrahydrofolate + H2O = (6R)-10-formyltetrahydrofolate + H(+). It participates in one-carbon metabolism; tetrahydrofolate interconversion. Catalyzes the oxidation of 5,10-methylenetetrahydrofolate to 5,10-methenyltetrahydrofolate and then the hydrolysis of 5,10-methenyltetrahydrofolate to 10-formyltetrahydrofolate. The protein is Bifunctional protein FolD of Streptococcus pyogenes serotype M2 (strain MGAS10270).